A 339-amino-acid polypeptide reads, in one-letter code: MRVYYDRDADVNLIKSKKVVIVGYGSQGRAHALNLKDSGAANVRVALREGSATVQKAQADGFEVMNVADAAKWADLMMMATPDELQADIYRDHIHNNLRDGAAIAFAHGLNVHCGLIEPKKTVDVMMIAPKGPGHTVRGEYQKGGGVPCLIAIHQDASGNAHDLALSYASGVGGGRSGVIETTFKEECETDLFGEQAVLCGGVVELIRTGFEVLVEAGYAPEMAYFECLNEMKLIVDLIYEGGIANMNYSISNTAEWGEYVTGPRIITAETKAEMKRVLKDIQTGKFTSDWMQEWKAGAARFKGIRRLNDAHQIEEVGGKLRAMMPWIEKNKLVDKARN.

Residues 1-182 (MRVYYDRDAD…GGGRSGVIET (182 aa)) form the KARI N-terminal Rossmann domain. Residues 24 to 27 (YGSQ), Arg-48, Ser-51, Thr-53, and 83 to 86 (DELQ) each bind NADP(+). His-108 is an active-site residue. Residue Gly-134 participates in NADP(+) binding. The KARI C-terminal knotted domain maps to 183 to 328 (TFKEECETDL…GKLRAMMPWI (146 aa)). Positions 191, 195, 227, and 231 each coordinate Mg(2+). Ser-252 lines the substrate pocket.

Belongs to the ketol-acid reductoisomerase family. It depends on Mg(2+) as a cofactor.

The enzyme catalyses (2R)-2,3-dihydroxy-3-methylbutanoate + NADP(+) = (2S)-2-acetolactate + NADPH + H(+). It carries out the reaction (2R,3R)-2,3-dihydroxy-3-methylpentanoate + NADP(+) = (S)-2-ethyl-2-hydroxy-3-oxobutanoate + NADPH + H(+). It participates in amino-acid biosynthesis; L-isoleucine biosynthesis; L-isoleucine from 2-oxobutanoate: step 2/4. It functions in the pathway amino-acid biosynthesis; L-valine biosynthesis; L-valine from pyruvate: step 2/4. In terms of biological role, involved in the biosynthesis of branched-chain amino acids (BCAA). Catalyzes an alkyl-migration followed by a ketol-acid reduction of (S)-2-acetolactate (S2AL) to yield (R)-2,3-dihydroxy-isovalerate. In the isomerase reaction, S2AL is rearranged via a Mg-dependent methyl migration to produce 3-hydroxy-3-methyl-2-ketobutyrate (HMKB). In the reductase reaction, this 2-ketoacid undergoes a metal-dependent reduction by NADPH to yield (R)-2,3-dihydroxy-isovalerate. This chain is Ketol-acid reductoisomerase (NADP(+)), found in Brucella melitensis biotype 2 (strain ATCC 23457).